The primary structure comprises 343 residues: Versiconal hemiacetal acetate reductase (343 aa).

The Proton donor role is filled by tyrosine 59. Histidine 144 is a substrate binding site. 229 to 239 (SPVARGALARP) serves as a coordination point for NADP(+).

It belongs to the aldo/keto reductase family. Aldo/keto reductase 2 subfamily.

The enzyme catalyses (2S)-versicolorone + NADP(+) = 1'-hydroxyversicolorone + NADPH + H(+). The catalysed reaction is (3S)-versiconol acetate + NADP(+) = (2S,3S)-versiconal hemiacetal acetate + NADPH + H(+). It catalyses the reaction (S)-versiconol + NADP(+) = (2S-3S)-versiconal hemiacetal + NADPH + H(+). Its function is as follows. Catalyzes 3 reactions: from hydroxyversicolorone (HVN) to versicolorone (VONE), from versiconal hemiacetal acetate (VHA) to versiconol acetate (VOAc) and from versiconal (VHOH) to versiconol (VOH). Probably not an aflatoxin biosynthesis gene: may be involved in the vertical branching steps connecting the main pathway from HVN to VHOH with the side pathway from VONE to VOH. This chain is Versiconal hemiacetal acetate reductase (vrdA), found in Aspergillus parasiticus.